Here is a 96-residue protein sequence, read N- to C-terminus: Prokineticin Bv8 (96 aa).

A signal peptide spans 1–19; that stretch reads MKCFAQIVVLLLVIAFSHG. The interval 20 to 24 is may be important for binding to prokineticin receptor 2; the sequence is AVITG. 5 cysteine pairs are disulfide-bonded: C26–C38, C32–C50, C37–C78, C60–C86, and C80–C95.

Expressed by the skin glands.

Its subcellular location is the secreted. In terms of biological role, potent agonist for both PKR1/PROKR1 and PKR2/PROKR2, and inducer of a potent and long-lasting hyperalgesia. Shows an EC(50) of 0.264 nM, when tested on neuroblastoma cells (SH-SY5Y) which endogenously express mainly PKR2/PROKR2. Also potentiates capsaicin-induced TRPV1 current, when tested on DRG neurons. Induces a biphasic hyperalgesia to tactile and thermal stimuli after systemic injection of this protein into rat. The initial phase of hyperalgesia is caused by a local action on nociceptors, because intraplantar injection of this protein causes a strong and localized hyperalgesia with a similar time course to that of the initial phase of hyperalgesia seen with systemic injection. The secondary phase of hyperalgesia is not seen with local intraplantar injection and is therefore probably attributable to a central action of this protein. At subnanomolar concentrations, this protein both induces potent chemotaxis of macrophages and stimulates LPS-induced production of the pro-inflammatory cytokines IL-1 and IL-12. In vivo, this protein potently stimulates the contraction of the guinea-pig gastrointestinal (GI) smooth muscle (at nanomolar concentration). The protein is Prokineticin Bv8 of Bombina variegata (Yellow-bellied toad).